The sequence spans 355 residues: Isocitrate dehydrogenase [NAD] subunit gamma, mitochondrial (355 aa).

Residue I1 is a transit peptide, mitochondrion. 2 residues coordinate citrate: T82 and N95. Substrate is bound by residues R98, R129, and D216. D216 provides a ligand contact to Mn(2+). 3 residues coordinate ADP: N274, T275, and N286.

Belongs to the isocitrate and isopropylmalate dehydrogenases family. As to quaternary structure, heterooligomer of subunits alpha (IDH3A), beta (IDH3B), and gamma (IDH3G) in the apparent ratio of 2:1:1. The heterodimer containing one IDH3A and one IDH3B subunit and the heterodimer containing one IDH3A and one IDH3G subunit assemble into a heterotetramer (which contains two subunits of IDH3A, one of IDH3B and one of IDH3G) and further into the heterooctamer. It depends on Mg(2+) as a cofactor. Mn(2+) is required as a cofactor.

The protein resides in the mitochondrion. The heterotetramer and the heterodimer composed of IDH3A and IDH3G subunits can be allosterically activated by citrate (CIT) or/and ADP, and the two activators can act independently or synergistically. The heterodimer composed of IDH3A and IDH3B subunits cannot be allosterically regulated and the allosteric regulation of the heterotetramer is through the IDH3G subunit and not the IDH3B subunit. The IDH3G subunit contains the allosteric site which consists of a CIT-binding site and an ADP-binding site, and the binding of CIT and ADP causes conformational changes at the allosteric site which are transmitted to the active site in the catalytic subunit (IDH3A) through a cascade of conformational changes at the heterodimer interface, leading to stabilization of the isocitrate-binding at the active site and thus activation of the enzyme. ATP can activate the heterotetramer and the heterodimer composed of IDH3A and IDH3G subunits at low concentrations but inhibits their activities at high concentrations, whereas ATP exhibits only inhibitory effect on the heterodimer composed of IDH3A and IDH3B subunits. Functionally, regulatory subunit which plays a role in the allosteric regulation of the enzyme catalyzing the decarboxylation of isocitrate (ICT) into alpha-ketoglutarate. The heterodimer composed of the alpha (IDH3A) and beta (IDH3B) subunits and the heterodimer composed of the alpha (IDH3A) and gamma (IDH3G) subunits, have considerable basal activity but the full activity of the heterotetramer (containing two subunits of IDH3A, one of IDH3B and one of IDH3G) requires the assembly and cooperative function of both heterodimers. The sequence is that of Isocitrate dehydrogenase [NAD] subunit gamma, mitochondrial (IDH3G) from Macaca fascicularis (Crab-eating macaque).